Here is an 81-residue protein sequence, read N- to C-terminus: CLAVATA3/ESR (CLE)-related protein 6 (81 aa).

The first 26 residues, 1 to 26 (MANLILKQSLIILLIIYSTPILSSQA), serve as a signal peptide directing secretion. Hydroxyproline occurs at positions 73 and 76. O-linked (Ara...) hydroxyproline glycosylation occurs at proline 76.

Belongs to the CLV3/ESR signal peptide family. In terms of processing, the O-glycosylation (arabinosylation) of the hydroxyproline Pro-76 enhances binding affinity of the CLE6p peptide for its receptor. As to expression, mostly expressed in roots, seedlings, stems and flowers, and, to a lower extent, in apex and siliques.

The protein localises to the secreted. The protein resides in the extracellular space. Functionally, extracellular signal peptide that regulates cell fate. The chain is CLAVATA3/ESR (CLE)-related protein 6 from Arabidopsis thaliana (Mouse-ear cress).